A 631-amino-acid polypeptide reads, in one-letter code: Fusexin 1 (631 aa).

The signal sequence occupies residues 1 to 19; that stretch reads MRRAALILAFVLFIGLSSA. Positions 20-90 are domain I N-terminus; it reads TVTSADSITY…THQDSKLKYS (71 aa). Residues 20 to 537 lie on the Extracellular side of the membrane; it reads TVTSADSITY…NLFGGSGSGD (518 aa). Residues 91-170 form a domain II N-terminus region; that stretch reads TSTSDELRDI…KLATPAYIDN (80 aa). Ca(2+) is bound by residues Asp-112, Ser-146, Tyr-149, and Asp-150. The cysteines at positions 125 and 155 are disulfide-linked. Residues 143-148 form a fusion loop, required for fusogenic activity, not required for membrane surface localization region; that stretch reads SVTSPV. The segment at 171-224 is domain I central section; the sequence is PDEIFTAKAELQAGDKTIQSATLSNGDAGDGTVTDLGDSKISWNGNLDLGASEP. Residues 225-316 form a domain II C-terminus region; the sequence is ENSRVIALYS…KDSSLDTGSF (92 aa). The segment at 317-348 is domain I C-terminus; sequence VYDTPELLSYPSFTVYVDAGENGYIEVTKPTG. The segment at 349 to 455 is domain III; sequence DPDIISTSST…SVSVTGIQQS (107 aa). 3 disulfide bridges follow: Cys-389/Cys-432, Cys-457/Cys-477, and Cys-490/Cys-506. Residues 443–467 form a disordered region; that stretch reads DSTSVSVTGIQQSECNPGDQRREKN. The interval 456 to 509 is domain IV, required for fusogenic activity; sequence ECNPGDQRREKNENDRWEIYTCQDNGLTYEYDVTCAEDEKAVAQGDNQFSCEKQ. Residues 510–537 are stem; the sequence is DDDSGGGDNTGSDSGLFSNLFGGSGSGD. Residues 538–558 form a helical membrane-spanning segment; it reads LLTQVHTALSILAGLVAGFFG. Over 559–590 the chain is Cytoplasmic; that stretch reads YRGARWIHGETDIKGGFKLESRNVSRVKRGSP. The chain crosses the membrane as a helical span at residues 591 to 611; that stretch reads VAGIVGAVLGFVVGYGVASVF. Residue His-612 is a topological domain, extracellular. The chain crosses the membrane as a helical span at residues 613 to 630; it reads PVVQIIVVLGIAVGLYYF. Position 631 (Arg-631) is a topological domain, cytoplasmic.

This sequence belongs to the HAP2/GCS1 family. Fusexin 1 subfamily. Monomer in solution, crystallizes as a trimer in high salt (2.5 M NaCl, 0.2 M CaCl(2)). The trimer is stabilized by interdomain contacts and numerous Ca(2+) and Na(+) ions.

Its subcellular location is the cell surface. It localises to the cell membrane. Functionally, exhibits fusogenic activity. Mediates cell-cell fusion in mammalian cells when present in both cells (bilateral fusion). This is Fusexin 1 from Uncultured archaeon.